Here is a 177-residue protein sequence, read N- to C-terminus: MLDAFSRVVVNSDAKAAYVGGSDLQALKKFIADGNKRLDSVNAIVSNASCIVSDAVSGMICENPGLIAPGGNCYTNRRMAACLRDGEIILRYVSYALLAGDPSVLEDRCLNGLKETYIALGVPTNSSVRAVSIMKASAVAFITNTASQRKMATADGDCSALASEVASYCDRVAAAIS.

The phycourobilin site is built by Cys-50 and Cys-61. Asn-72 bears the N4-methylasparagine mark. (2R,3E)-phycoerythrobilin-binding residues include Cys-82 and Cys-158.

This sequence belongs to the phycobiliprotein family. Heterodimer of an alpha and a beta chain. Contains two covalently linked phycoerythrobilin chromophores and one covalently linked phycourobilin chromophore.

The protein localises to the plastid. The protein resides in the chloroplast thylakoid membrane. In terms of biological role, light-harvesting photosynthetic bile pigment-protein from the phycobiliprotein complex. In Porphyra purpurea (Red seaweed), this protein is R-phycoerythrin beta chain (cpeB).